A 29-amino-acid polypeptide reads, in one-letter code: Cyclotide mela-3 (29 aa).

Residues 1–29 (GKPICGETCFKGKCYTPGCTCSYPICKKD) constitute a cross-link (cyclopeptide (Gly-Asp)). Intrachain disulfides connect C5–C19, C9–C21, and C14–C26.

Post-translationally, this is a cyclic peptide. Contains 3 disulfide bonds.

In terms of biological role, probably participates in a plant defense mechanism (Potential). Binds to and induces leakage in phospholipd membranes, particularly ones containing 1-palmitoyl-2-oleophosphatidylethanolamine (POPE). In vitro, displays cytotoxicity against cultured cells. Not active against Gram-negative bacterium E.coli ATCC 25922 or Gram-positive bacterium S.aureus ATCC 25923 up to a concentration of 64 uM. The polypeptide is Cyclotide mela-3 (Melicytus latifolius (Norfolk Island mahoe)).